The sequence spans 209 residues: 8-oxoguanine DNA glycosylase/AP lyase (209 aa).

Residues lysine 132 and aspartate 150 contribute to the active site.

This sequence belongs to the type-2 OGG1 family.

The enzyme catalyses 2'-deoxyribonucleotide-(2'-deoxyribose 5'-phosphate)-2'-deoxyribonucleotide-DNA = a 3'-end 2'-deoxyribonucleotide-(2,3-dehydro-2,3-deoxyribose 5'-phosphate)-DNA + a 5'-end 5'-phospho-2'-deoxyribonucleoside-DNA + H(+). Functionally, catalyzes the excision of an oxidatively damaged form of guanine (7,8-dihydro-8-oxoguanine = 8-oxoG) from DNA. Also cleaves the DNA backbone at apurinic/apyrimidinic sites (AP sites). This is 8-oxoguanine DNA glycosylase/AP lyase from Picrophilus torridus (strain ATCC 700027 / DSM 9790 / JCM 10055 / NBRC 100828 / KAW 2/3).